Consider the following 700-residue polypeptide: Non-hemolytic phospholipase C (700 aa).

Residues 1 to 34 (MTNQNRRDFLRLAAGTAGAAALQLFPPVIREALA) constitute a signal peptide (tat-type signal).

The protein belongs to the bacterial phospholipase C family. Post-translationally, predicted to be exported by the Tat system. The position of the signal peptide cleavage has not been experimentally proven.

It catalyses the reaction a 1,2-diacyl-sn-glycero-3-phosphocholine + H2O = phosphocholine + a 1,2-diacyl-sn-glycerol + H(+). Its function is as follows. Hydrolyzes phosphatidylserine as well as phosphatidylcholine. In Burkholderia pseudomallei (strain K96243), this protein is Non-hemolytic phospholipase C (plcN).